A 544-amino-acid polypeptide reads, in one-letter code: Phosphoacetylglucosamine mutase (544 aa).

The active-site Phosphoserine intermediate is the S66. Mg(2+) is bound by residues S66, D290, D292, and D294. Residues 387–389, 512–516, and R521 each bind substrate; these read EAN and RASGT.

The protein belongs to the phosphohexose mutase family. Mg(2+) serves as cofactor.

The enzyme catalyses N-acetyl-alpha-D-glucosamine 1-phosphate = N-acetyl-D-glucosamine 6-phosphate. The protein operates within nucleotide-sugar biosynthesis; UDP-N-acetyl-alpha-D-glucosamine biosynthesis; N-acetyl-alpha-D-glucosamine 1-phosphate from alpha-D-glucosamine 6-phosphate (route I): step 2/2. Catalyzes the conversion of GlcNAc-6-P into GlcNAc-1-P during the synthesis of uridine diphosphate/UDP-GlcNAc, which is a biosynthetic precursor of chitin and also supplies the amino sugars for N-linked oligosaccharides of glycoproteins. The chain is Phosphoacetylglucosamine mutase from Candida albicans (Yeast).